The sequence spans 396 residues: Ribosomal RNA large subunit methyltransferase I (396 aa).

Residues 2–79 form the PUA domain; the sequence is AVRIKLKPGR…REEEIDREFF (78 aa).

This sequence belongs to the methyltransferase superfamily. RlmI family.

The protein resides in the cytoplasm. The catalysed reaction is cytidine(1962) in 23S rRNA + S-adenosyl-L-methionine = 5-methylcytidine(1962) in 23S rRNA + S-adenosyl-L-homocysteine + H(+). Its function is as follows. Specifically methylates the cytosine at position 1962 (m5C1962) of 23S rRNA. The chain is Ribosomal RNA large subunit methyltransferase I from Shewanella sp. (strain MR-7).